We begin with the raw amino-acid sequence, 191 residues long: dITP/XTP pyrophosphatase (191 aa).

Position 8–13 (8–13 (SKNQGK)) interacts with substrate. Positions 38 and 67 each coordinate Mg(2+). Catalysis depends on Asp-67, which acts as the Proton acceptor. Residues Ser-68, 146 to 149 (FGYD), Lys-169, and 174 to 175 (HR) each bind substrate.

It belongs to the HAM1 NTPase family. In terms of assembly, homodimer. The cofactor is Mg(2+).

It catalyses the reaction XTP + H2O = XMP + diphosphate + H(+). It carries out the reaction dITP + H2O = dIMP + diphosphate + H(+). The enzyme catalyses ITP + H2O = IMP + diphosphate + H(+). Functionally, pyrophosphatase that catalyzes the hydrolysis of nucleoside triphosphates to their monophosphate derivatives, with a high preference for the non-canonical purine nucleotides XTP (xanthosine triphosphate), dITP (deoxyinosine triphosphate) and ITP. Seems to function as a house-cleaning enzyme that removes non-canonical purine nucleotides from the nucleotide pool, thus preventing their incorporation into DNA/RNA and avoiding chromosomal lesions. The sequence is that of dITP/XTP pyrophosphatase from Prochlorococcus marinus subsp. pastoris (strain CCMP1986 / NIES-2087 / MED4).